A 275-amino-acid chain; its full sequence is Dermonecrotic toxin LamSicTox-alphaIV1i (275 aa).

Residue His-5 is part of the active site. Mg(2+) is bound by residues Glu-25 and Asp-27. His-41 (nucleophile) is an active-site residue. 2 disulfide bridges follow: Cys-45-Cys-51 and Cys-47-Cys-192. Residue Asp-85 participates in Mg(2+) binding.

It belongs to the arthropod phospholipase D family. Class II subfamily. Mg(2+) is required as a cofactor. As to expression, expressed by the venom gland.

Its subcellular location is the secreted. It carries out the reaction an N-(acyl)-sphingosylphosphocholine = an N-(acyl)-sphingosyl-1,3-cyclic phosphate + choline. The catalysed reaction is an N-(acyl)-sphingosylphosphoethanolamine = an N-(acyl)-sphingosyl-1,3-cyclic phosphate + ethanolamine. It catalyses the reaction a 1-acyl-sn-glycero-3-phosphocholine = a 1-acyl-sn-glycero-2,3-cyclic phosphate + choline. The enzyme catalyses a 1-acyl-sn-glycero-3-phosphoethanolamine = a 1-acyl-sn-glycero-2,3-cyclic phosphate + ethanolamine. Functionally, dermonecrotic toxins cleave the phosphodiester linkage between the phosphate and headgroup of certain phospholipids (sphingolipid and lysolipid substrates), forming an alcohol (often choline) and a cyclic phosphate. This toxin acts on sphingomyelin (SM). It may also act on ceramide phosphoethanolamine (CPE), lysophosphatidylcholine (LPC) and lysophosphatidylethanolamine (LPE), but not on lysophosphatidylserine (LPS), and lysophosphatidylglycerol (LPG). It acts by transphosphatidylation, releasing exclusively cyclic phosphate products as second products. Induces dermonecrosis, hemolysis, increased vascular permeability, edema, inflammatory response, and platelet aggregation. This chain is Dermonecrotic toxin LamSicTox-alphaIV1i, found in Loxosceles amazonica (Recluse spider).